A 522-amino-acid polypeptide reads, in one-letter code: Maturase K (522 aa).

Belongs to the intron maturase 2 family. MatK subfamily.

The protein localises to the plastid. It localises to the chloroplast. In terms of biological role, usually encoded in the trnK tRNA gene intron. Probably assists in splicing its own and other chloroplast group II introns. The protein is Maturase K of Tigridia pavonia (Mexican shell flower).